The sequence spans 395 residues: Prostaglandin D2 receptor 2 (395 aa).

The Extracellular portion of the chain corresponds to Met-1–His-33. 2 N-linked (GlcNAc...) asparagine glycosylation sites follow: Asn-4 and Asn-25. A helical transmembrane segment spans residues Ala-34–Val-56. Residues Val-57 to Thr-67 lie on the Cytoplasmic side of the membrane. The chain crosses the membrane as a helical span at residues Thr-68–Tyr-89. Topologically, residues Phe-90 to Leu-106 are extracellular. A disulfide bridge connects residues Cys-104 and Cys-182. Residues His-107 to Leu-127 form a helical membrane-spanning segment. Topologically, residues Asp-128 to Ala-146 are cytoplasmic. A helical transmembrane segment spans residues Ala-147–Val-168. The Extracellular segment spans residues Phe-169 to Lys-210. A helical membrane pass occupies residues Phe-211 to Leu-231. Residues Arg-232 to Leu-247 are Cytoplasmic-facing. Residues Val-248 to Glu-269 form a helical membrane-spanning segment. The Extracellular segment spans residues Ala-270 to Phe-288. A helical membrane pass occupies residues Val-289–Cys-308. The Cytoplasmic portion of the chain corresponds to Pro-309–Ser-395. The Involved in the recycling of CRTH2 motif lies at Asp-330–Leu-333. Ser-331 and Ser-345 each carry phosphoserine. The segment at Leu-333 to Pro-363 is disordered.

This sequence belongs to the G-protein coupled receptor 1 family. Phosphorylated. Widespread expression. High expression in stomach, small intestine, heart and thymus. Intermediate expression in colon, spinal cord and peripheral blood and low expression in brain, skeletal muscle and spleen. Expressed also on Th2- and Tc2- type cells, eosinophils and basophils.

Its subcellular location is the cell membrane. Receptor for prostaglandin D2 (PGD2). Coupled to the G(i)-protein. Receptor activation may result in pertussis toxin-sensitive decreases in cAMP levels and Ca(2+) mobilization. PI3K signaling is also implicated in mediating PTGDR2 effects. PGD2 induced receptor internalization. CRTH2 internalization can be regulated by diverse kinases such as, PKC, PKA, GRK2, GPRK5/GRK5 and GRK6. Receptor activation is responsible, at least in part, in immune regulation and allergic/inflammation responses. The sequence is that of Prostaglandin D2 receptor 2 (PTGDR2) from Homo sapiens (Human).